A 462-amino-acid chain; its full sequence is Argininosuccinate lyase (462 aa).

This sequence belongs to the lyase 1 family. Argininosuccinate lyase subfamily.

The protein localises to the cytoplasm. It catalyses the reaction 2-(N(omega)-L-arginino)succinate = fumarate + L-arginine. Its pathway is amino-acid biosynthesis; L-arginine biosynthesis; L-arginine from L-ornithine and carbamoyl phosphate: step 3/3. The sequence is that of Argininosuccinate lyase from Nitratiruptor sp. (strain SB155-2).